The following is a 269-amino-acid chain: Hydroxyethylthiazole kinase (269 aa).

Position 45 (Met-45) interacts with substrate. Arg-121 and Thr-167 together coordinate ATP. Gly-194 is a binding site for substrate.

This sequence belongs to the Thz kinase family. Mg(2+) serves as cofactor.

It catalyses the reaction 5-(2-hydroxyethyl)-4-methylthiazole + ATP = 4-methyl-5-(2-phosphooxyethyl)-thiazole + ADP + H(+). It functions in the pathway cofactor biosynthesis; thiamine diphosphate biosynthesis; 4-methyl-5-(2-phosphoethyl)-thiazole from 5-(2-hydroxyethyl)-4-methylthiazole: step 1/1. Functionally, catalyzes the phosphorylation of the hydroxyl group of 4-methyl-5-beta-hydroxyethylthiazole (THZ). This Geobacillus sp. (strain WCH70) protein is Hydroxyethylthiazole kinase.